Consider the following 212-residue polypeptide: ATP-dependent dethiobiotin synthetase BioD (212 aa).

Residue 10–15 participates in ATP binding; that stretch reads GVGKTF. Residue Thr14 coordinates Mg(2+). The active site involves Lys36. Residue Ser40 coordinates substrate. ATP contacts are provided by residues Asp45, 106-109, and 167-168; these read EGAG and NC. Mg(2+)-binding residues include Asp45 and Glu106.

The protein belongs to the dethiobiotin synthetase family. As to quaternary structure, homodimer. Mg(2+) serves as cofactor.

The protein localises to the cytoplasm. It catalyses the reaction (7R,8S)-7,8-diammoniononanoate + CO2 + ATP = (4R,5S)-dethiobiotin + ADP + phosphate + 3 H(+). It functions in the pathway cofactor biosynthesis; biotin biosynthesis; biotin from 7,8-diaminononanoate: step 1/2. In terms of biological role, catalyzes a mechanistically unusual reaction, the ATP-dependent insertion of CO2 between the N7 and N8 nitrogen atoms of 7,8-diaminopelargonic acid (DAPA, also called 7,8-diammoniononanoate) to form a ureido ring. In Methanococcus aeolicus (strain ATCC BAA-1280 / DSM 17508 / OCM 812 / Nankai-3), this protein is ATP-dependent dethiobiotin synthetase BioD.